Consider the following 365-residue polypeptide: Protein-glutamate methylesterase/protein-glutamine glutaminase 2 (365 aa).

The region spanning 18-135 (RVLIVDDSAM…GQGLPAIMRD (118 aa)) is the Response regulatory domain. At aspartate 69 the chain carries 4-aspartylphosphate. Residues 162–355 (GASEDWIHAL…ARMMLAAAAD (194 aa)) form the CheB-type methylesterase domain. Catalysis depends on residues serine 174, histidine 200, and aspartate 297.

It belongs to the CheB family. In terms of processing, phosphorylated by CheA. Phosphorylation of the N-terminal regulatory domain activates the methylesterase activity.

It is found in the cytoplasm. The enzyme catalyses [protein]-L-glutamate 5-O-methyl ester + H2O = L-glutamyl-[protein] + methanol + H(+). It catalyses the reaction L-glutaminyl-[protein] + H2O = L-glutamyl-[protein] + NH4(+). In terms of biological role, involved in chemotaxis. Part of a chemotaxis signal transduction system that modulates chemotaxis in response to various stimuli. Catalyzes the demethylation of specific methylglutamate residues introduced into the chemoreceptors (methyl-accepting chemotaxis proteins or MCP) by CheR. Also mediates the irreversible deamidation of specific glutamine residues to glutamic acid. This is Protein-glutamate methylesterase/protein-glutamine glutaminase 2 from Cereibacter sphaeroides (strain ATCC 17023 / DSM 158 / JCM 6121 / CCUG 31486 / LMG 2827 / NBRC 12203 / NCIMB 8253 / ATH 2.4.1.) (Rhodobacter sphaeroides).